Consider the following 37-residue polypeptide: Large ribosomal subunit protein bL12 (37 aa).

Belongs to the bacterial ribosomal protein bL12 family. As to quaternary structure, homodimer. Part of the ribosomal stalk of the 50S ribosomal subunit. Forms a multimeric L10(L12)X complex, where L10 forms an elongated spine to which 2 to 4 L12 dimers bind in a sequential fashion. Binds GTP-bound translation factors.

In terms of biological role, forms part of the ribosomal stalk which helps the ribosome interact with GTP-bound translation factors. Is thus essential for accurate translation. This Clostridium pasteurianum protein is Large ribosomal subunit protein bL12 (rplL).